The sequence spans 161 residues: uncharacterized protein (161 aa).

This is an uncharacterized protein from Caenorhabditis elegans.